The sequence spans 688 residues: Glycine--tRNA ligase beta subunit (688 aa).

This sequence belongs to the class-II aminoacyl-tRNA synthetase family. Tetramer of two alpha and two beta subunits.

It is found in the cytoplasm. The catalysed reaction is tRNA(Gly) + glycine + ATP = glycyl-tRNA(Gly) + AMP + diphosphate. The chain is Glycine--tRNA ligase beta subunit from Listeria monocytogenes serotype 4a (strain HCC23).